We begin with the raw amino-acid sequence, 266 residues long: Putative peptidyl-prolyl cis-trans isomerase NifM (266 aa).

The 98-residue stretch at 124 to 221 (PEQRLTRHLL…LGWHLLWCEA (98 aa)) folds into the PpiC domain.

It belongs to the PpiC/parvulin rotamase family.

The catalysed reaction is [protein]-peptidylproline (omega=180) = [protein]-peptidylproline (omega=0). Required for the activation and stabilization of the iron-component (NifH) of nitrogenase. Probable PPIase. This is Putative peptidyl-prolyl cis-trans isomerase NifM (nifM) from Klebsiella oxytoca.